Here is a 157-residue protein sequence, read N- to C-terminus: S-ribosylhomocysteine lyase (157 aa).

The Fe cation site is built by histidine 54, histidine 58, and cysteine 124.

It belongs to the LuxS family. In terms of assembly, homodimer. Fe cation is required as a cofactor.

It carries out the reaction S-(5-deoxy-D-ribos-5-yl)-L-homocysteine = (S)-4,5-dihydroxypentane-2,3-dione + L-homocysteine. In terms of biological role, involved in the synthesis of autoinducer 2 (AI-2) which is secreted by bacteria and is used to communicate both the cell density and the metabolic potential of the environment. The regulation of gene expression in response to changes in cell density is called quorum sensing. Catalyzes the transformation of S-ribosylhomocysteine (RHC) to homocysteine (HC) and 4,5-dihydroxy-2,3-pentadione (DPD). The sequence is that of S-ribosylhomocysteine lyase from Lacticaseibacillus paracasei (strain ATCC 334 / BCRC 17002 / CCUG 31169 / CIP 107868 / KCTC 3260 / NRRL B-441) (Lactobacillus paracasei).